The primary structure comprises 202 residues: Flagellar transcriptional regulator FlhC (202 aa).

Positions 137, 140, 157, and 160 each coordinate Zn(2+).

This sequence belongs to the FlhC family. Heterohexamer composed of two FlhC and four FlhD subunits. Each FlhC binds a FlhD dimer, forming a heterotrimer, and a hexamer assembles by dimerization of two heterotrimers. Requires Zn(2+) as cofactor.

The protein localises to the cytoplasm. In terms of biological role, functions in complex with FlhD as a master transcriptional regulator that regulates transcription of several flagellar and non-flagellar operons by binding to their promoter region. Activates expression of class 2 flagellar genes, including fliA, which is a flagellum-specific sigma factor that turns on the class 3 genes. Also regulates genes whose products function in a variety of physiological pathways. In Variovorax paradoxus (strain S110), this protein is Flagellar transcriptional regulator FlhC.